We begin with the raw amino-acid sequence, 567 residues long: Urease subunit alpha (567 aa).

The 439-residue stretch at 129–567 folds into the Urease domain; sequence GGVDTHIHWI…LPMAQRYFLF (439 aa). 3 residues coordinate Ni(2+): histidine 134, histidine 136, and lysine 217. Lysine 217 is subject to N6-carboxylysine. Histidine 219 contributes to the substrate binding site. Histidine 246 and histidine 272 together coordinate Ni(2+). Histidine 320 functions as the Proton donor in the catalytic mechanism. Ni(2+) is bound at residue aspartate 360.

This sequence belongs to the metallo-dependent hydrolases superfamily. Urease alpha subunit family. As to quaternary structure, heterotrimer of UreA (gamma), UreB (beta) and UreC (alpha) subunits. Three heterotrimers associate to form the active enzyme. Ni cation is required as a cofactor. Post-translationally, carboxylation allows a single lysine to coordinate two nickel ions.

It localises to the cytoplasm. The enzyme catalyses urea + 2 H2O + H(+) = hydrogencarbonate + 2 NH4(+). It functions in the pathway nitrogen metabolism; urea degradation; CO(2) and NH(3) from urea (urease route): step 1/1. This chain is Urease subunit alpha, found in Citrobacter koseri (strain ATCC BAA-895 / CDC 4225-83 / SGSC4696).